Reading from the N-terminus, the 543-residue chain is Chaperonin GroEL (543 aa).

ATP-binding positions include 30–33, Lys51, 87–91, Gly415, 480–482, and Asp496; these read TLGP, DGTTT, and NAL.

Belongs to the chaperonin (HSP60) family. As to quaternary structure, forms a cylinder of 14 subunits composed of two heptameric rings stacked back-to-back. Interacts with the co-chaperonin GroES.

The protein localises to the cytoplasm. The catalysed reaction is ATP + H2O + a folded polypeptide = ADP + phosphate + an unfolded polypeptide.. In terms of biological role, together with its co-chaperonin GroES, plays an essential role in assisting protein folding. The GroEL-GroES system forms a nano-cage that allows encapsulation of the non-native substrate proteins and provides a physical environment optimized to promote and accelerate protein folding. This is Chaperonin GroEL from Gemmatimonas aurantiaca (strain DSM 14586 / JCM 11422 / NBRC 100505 / T-27).